The primary structure comprises 446 residues: Tubulin beta chain (446 aa).

GTP contacts are provided by Gln-11, Glu-69, Ser-138, Gly-142, Thr-143, Gly-144, Asn-204, and Asn-226. Glu-69 is a Mg(2+) binding site. Residues 426–446 (QDATAEEEGEYVEDEDEMDGM) form a disordered region. Acidic residues predominate over residues 429 to 446 (TAEEEGEYVEDEDEMDGM).

Belongs to the tubulin family. In terms of assembly, dimer of alpha and beta chains. A typical microtubule is a hollow water-filled tube with an outer diameter of 25 nm and an inner diameter of 15 nM. Alpha-beta heterodimers associate head-to-tail to form protofilaments running lengthwise along the microtubule wall with the beta-tubulin subunit facing the microtubule plus end conferring a structural polarity. Microtubules usually have 13 protofilaments but different protofilament numbers can be found in some organisms and specialized cells. Mg(2+) serves as cofactor.

The protein resides in the cytoplasm. It localises to the cytoskeleton. Tubulin is the major constituent of microtubules, a cylinder consisting of laterally associated linear protofilaments composed of alpha- and beta-tubulin heterodimers. Microtubules grow by the addition of GTP-tubulin dimers to the microtubule end, where a stabilizing cap forms. Below the cap, tubulin dimers are in GDP-bound state, owing to GTPase activity of alpha-tubulin. The polypeptide is Tubulin beta chain (Euplotes crassus).